Here is a 296-residue protein sequence, read N- to C-terminus: Glycine--tRNA ligase alpha subunit (296 aa).

Belongs to the class-II aminoacyl-tRNA synthetase family. As to quaternary structure, tetramer of two alpha and two beta subunits.

The protein localises to the cytoplasm. It carries out the reaction tRNA(Gly) + glycine + ATP = glycyl-tRNA(Gly) + AMP + diphosphate. The polypeptide is Glycine--tRNA ligase alpha subunit (Listeria innocua serovar 6a (strain ATCC BAA-680 / CLIP 11262)).